The following is a 763-amino-acid chain: Lysine-specific histone demethylase 1 homolog 2 (763 aa).

The SWIRM domain maps to 53–152; the sequence is QRETETEALI…FGVSAAFPAS (100 aa). FAD contacts are provided by Glu-192, Arg-194, Arg-200, and Glu-571.

The protein belongs to the flavin monoamine oxidase family. The cofactor is FAD.

Probable histone demethylase. The sequence is that of Lysine-specific histone demethylase 1 homolog 2 from Oryza sativa subsp. japonica (Rice).